The chain runs to 196 residues: Translation machinery-associated protein 22 (196 aa).

In terms of domain architecture, SUI1 spans 111–182 (IIIKRIERNK…EAKEYIEKLL (72 aa)).

This sequence belongs to the DENR family. In terms of assembly, interacts with the 40S ribosomal subunit.

The protein localises to the cytoplasm. The chain is Translation machinery-associated protein 22 (TMA22) from Lodderomyces elongisporus (strain ATCC 11503 / CBS 2605 / JCM 1781 / NBRC 1676 / NRRL YB-4239) (Yeast).